A 163-amino-acid polypeptide reads, in one-letter code: Probable protein tyrosine phosphatase type IVA B (163 aa).

The Tyrosine-protein phosphatase domain maps to 10–161 (TIIESSTHKF…YKASKKAGCK (152 aa)). A disulfide bridge connects residues Cys-49 and Cys-104. The active-site Proton donor is Asp-70. Residue Cys-104 is the Phosphocysteine intermediate of the active site. Position 105–110 (105–110 (IAGLGR)) interacts with phosphate. Arg-110 contributes to the substrate binding site. Cys-160 bears the Cysteine methyl ester mark. A lipid anchor (S-farnesyl cysteine) is attached at Cys-160. The propeptide at 161–163 (KIM) is removed in mature form.

Belongs to the protein-tyrosine phosphatase family.

Its subcellular location is the membrane. The catalysed reaction is O-phospho-L-tyrosyl-[protein] + H2O = L-tyrosyl-[protein] + phosphate. This is Probable protein tyrosine phosphatase type IVA B from Dictyostelium discoideum (Social amoeba).